A 285-amino-acid chain; its full sequence is Diphthine methyl ester synthase (285 aa).

S-adenosyl-L-methionine-binding positions include leucine 9, aspartate 84, glycine 87, 112-113 (SI), leucine 163, valine 221, and histidine 246.

Belongs to the diphthine synthase family.

It localises to the cytoplasm. It catalyses the reaction 2-[(3S)-amino-3-carboxypropyl]-L-histidyl-[translation elongation factor 2] + 4 S-adenosyl-L-methionine = diphthine methyl ester-[translation elongation factor 2] + 4 S-adenosyl-L-homocysteine + 3 H(+). It functions in the pathway protein modification; peptidyl-diphthamide biosynthesis. S-adenosyl-L-methionine-dependent methyltransferase that catalyzes four methylations of the modified target histidine residue in translation elongation factor 2 (EF-2), to form an intermediate called diphthine methyl ester. The four successive methylation reactions represent the second step of diphthamide biosynthesis. In Emericella nidulans (strain FGSC A4 / ATCC 38163 / CBS 112.46 / NRRL 194 / M139) (Aspergillus nidulans), this protein is Diphthine methyl ester synthase (dph5).